The chain runs to 146 residues: Hemoglobin subunit beta (146 aa).

The Globin domain occupies phenylalanine 2–histidine 146. Serine 44 carries the post-translational modification Phosphoserine. Position 59 is an N6-acetyllysine (lysine 59). Residue histidine 63 coordinates heme b. Position 82 is an N6-acetyllysine (lysine 82). Residue histidine 92 participates in heme b binding. Cysteine 93 bears the S-nitrosocysteine mark.

Belongs to the globin family. In terms of assembly, heterotetramer of two alpha chains and two beta chains. In terms of tissue distribution, red blood cells.

Its function is as follows. Involved in oxygen transport from the lung to the various peripheral tissues. This chain is Hemoglobin subunit beta (HBB), found in Paguma larvata (Masked palm civet).